Consider the following 479-residue polypeptide: Proline--tRNA ligase (479 aa).

Belongs to the class-II aminoacyl-tRNA synthetase family. ProS type 3 subfamily. Homodimer.

Its subcellular location is the cytoplasm. It carries out the reaction tRNA(Pro) + L-proline + ATP = L-prolyl-tRNA(Pro) + AMP + diphosphate. In terms of biological role, catalyzes the attachment of proline to tRNA(Pro) in a two-step reaction: proline is first activated by ATP to form Pro-AMP and then transferred to the acceptor end of tRNA(Pro). This is Proline--tRNA ligase from Mesomycoplasma hyopneumoniae (strain 7448) (Mycoplasma hyopneumoniae).